Here is a 144-residue protein sequence, read N- to C-terminus: Deoxyuridine 5'-triphosphate nucleotidohydrolase (144 aa).

Ser-66, Gly-79, Asp-82, Tyr-85, Lys-90, Arg-134, Phe-139, and Gly-140 together coordinate dUMP.

It belongs to the dUTPase family. Homotrimer. The cofactor is Mg(2+).

It carries out the reaction dUTP + H2O = dUMP + diphosphate + H(+). Its pathway is pyrimidine metabolism; dUMP biosynthesis; dUMP from dCTP (dUTP route): step 2/2. Its function is as follows. Involved in nucleotide metabolism via production of dUMP, the immediate precursor of thymidine nucleotides, and decreases the intracellular concentration of dUTP so that uracil cannot be incorporated into DNA. This chain is Deoxyuridine 5'-triphosphate nucleotidohydrolase (DUT1), found in Candida glabrata (strain ATCC 2001 / BCRC 20586 / JCM 3761 / NBRC 0622 / NRRL Y-65 / CBS 138) (Yeast).